The chain runs to 191 residues: Large ribosomal subunit protein uL6A (191 aa).

It belongs to the universal ribosomal protein uL6 family. In terms of assembly, component of the large ribosomal subunit (LSU). Mature yeast ribosomes consist of a small (40S) and a large (60S) subunit. The 40S small subunit contains 1 molecule of ribosomal RNA (18S rRNA) and 33 different proteins (encoded by 57 genes). The large 60S subunit contains 3 rRNA molecules (25S, 5.8S and 5S rRNA) and 46 different proteins (encoded by 81 genes). uL6 lines the binding pocket for eukaryotic elongation factor 2 (eEF2).

The protein localises to the cytoplasm. Its function is as follows. Component of the ribosome, a large ribonucleoprotein complex responsible for the synthesis of proteins in the cell. The small ribosomal subunit (SSU) binds messenger RNAs (mRNAs) and translates the encoded message by selecting cognate aminoacyl-transfer RNA (tRNA) molecules. The large subunit (LSU) contains the ribosomal catalytic site termed the peptidyl transferase center (PTC), which catalyzes the formation of peptide bonds, thereby polymerizing the amino acids delivered by tRNAs into a polypeptide chain. The nascent polypeptides leave the ribosome through a tunnel in the LSU and interact with protein factors that function in enzymatic processing, targeting, and the membrane insertion of nascent chains at the exit of the ribosomal tunnel. The sequence is that of Large ribosomal subunit protein uL6A from Saccharomyces cerevisiae (strain ATCC 204508 / S288c) (Baker's yeast).